The chain runs to 151 residues: UPF0178 protein Sde_3033 (151 aa).

Belongs to the UPF0178 family.

The sequence is that of UPF0178 protein Sde_3033 from Saccharophagus degradans (strain 2-40 / ATCC 43961 / DSM 17024).